The following is a 469-amino-acid chain: Ribulose bisphosphate carboxylase large chain (469 aa).

Lys8 is subject to N6,N6,N6-trimethyllysine. The substrate site is built by Asn117 and Thr167. Catalysis depends on Lys169, which acts as the Proton acceptor. A substrate-binding site is contributed by Lys171. Mg(2+)-binding residues include Lys195, Asp197, and Glu198. Lys195 carries the N6-carboxylysine modification. His288 (proton acceptor) is an active-site residue. 3 residues coordinate substrate: Arg289, His321, and Ser373.

It belongs to the RuBisCO large chain family. Type I subfamily. Heterohexadecamer of 8 large chains and 8 small chains; disulfide-linked. The disulfide link is formed within the large subunit homodimers. The cofactor is Mg(2+). The disulfide bond which can form in the large chain dimeric partners within the hexadecamer appears to be associated with oxidative stress and protein turnover.

Its subcellular location is the plastid. The protein resides in the chloroplast. It carries out the reaction 2 (2R)-3-phosphoglycerate + 2 H(+) = D-ribulose 1,5-bisphosphate + CO2 + H2O. The catalysed reaction is D-ribulose 1,5-bisphosphate + O2 = 2-phosphoglycolate + (2R)-3-phosphoglycerate + 2 H(+). RuBisCO catalyzes two reactions: the carboxylation of D-ribulose 1,5-bisphosphate, the primary event in carbon dioxide fixation, as well as the oxidative fragmentation of the pentose substrate in the photorespiration process. Both reactions occur simultaneously and in competition at the same active site. In Akania bidwillii (Turnipwood), this protein is Ribulose bisphosphate carboxylase large chain.